Here is a 105-residue protein sequence, read N- to C-terminus: ATP synthase subunit c (105 aa).

A run of 2 helical transmembrane segments spans residues 32-52 and 78-98; these read SILGAMIGLGIAAFGGAIGMG and VAMAMIEAQVIYTLVFAIIAI.

Belongs to the ATPase C chain family. As to quaternary structure, F-type ATPases have 2 components, F(1) - the catalytic core - and F(0) - the membrane proton channel. F(1) has five subunits: alpha(3), beta(3), gamma(1), delta(1), epsilon(1). F(0) has three main subunits: a(1), b(2) and c(10-14). The alpha and beta chains form an alternating ring which encloses part of the gamma chain. F(1) is attached to F(0) by a central stalk formed by the gamma and epsilon chains, while a peripheral stalk is formed by the delta and b chains.

It is found in the cell inner membrane. Functionally, f(1)F(0) ATP synthase produces ATP from ADP in the presence of a proton or sodium gradient. F-type ATPases consist of two structural domains, F(1) containing the extramembraneous catalytic core and F(0) containing the membrane proton channel, linked together by a central stalk and a peripheral stalk. During catalysis, ATP synthesis in the catalytic domain of F(1) is coupled via a rotary mechanism of the central stalk subunits to proton translocation. Key component of the F(0) channel; it plays a direct role in translocation across the membrane. A homomeric c-ring of between 10-14 subunits forms the central stalk rotor element with the F(1) delta and epsilon subunits. The protein is ATP synthase subunit c of Helicobacter pylori (strain ATCC 700392 / 26695) (Campylobacter pylori).